Reading from the N-terminus, the 520-residue chain is Calcium-dependent protein kinase 25 (520 aa).

Glycine 2 is lipidated: N-myristoyl glycine. The disordered stretch occupies residues 31–87; sequence PLKPQLQDKPPQPMLMNKDDDKTKLNDTHGDPKLLEGKEKPAQKQTSQGQGGRKCSD. A compositionally biased stretch (basic and acidic residues) spans 47–72; that stretch reads NKDDDKTKLNDTHGDPKLLEGKEKPA. A Protein kinase domain is found at 132-390; it reads YNLGSKLGHG…AQQVLCHPWI (259 aa). ATP is bound by residues 138 to 146 and lysine 161; that span reads LGHGQFGTT. The active-site Proton acceptor is the aspartate 256. Phosphoserine is present on serine 296. Residues 396–426 are autoinhibitory domain; sequence APDTPLDTTVLSRLKKFSATDKLKKMALRVI. The EF-hand 1 domain maps to 433-468; sequence EEIHELRETFKTIDSGKSGRVTYKELKNGLERFNTN. The Ca(2+) site is built by aspartate 446, serine 450, arginine 452, glutamate 457, aspartate 483, glutamate 487, threonine 489, and glutamate 494. The 37-residue stretch at 469–505 folds into the EF-hand 2; degenerate domain; that stretch reads LDNSDINSLMQIPTDVHLEDTVDYNEFIEAIVRLRQI.

This sequence belongs to the protein kinase superfamily. Ser/Thr protein kinase family. CDPK subfamily.

Its subcellular location is the membrane. The enzyme catalyses L-seryl-[protein] + ATP = O-phospho-L-seryl-[protein] + ADP + H(+). It catalyses the reaction L-threonyl-[protein] + ATP = O-phospho-L-threonyl-[protein] + ADP + H(+). With respect to regulation, activated by calcium. Autophosphorylation may play an important role in the regulation of the kinase activity. Its function is as follows. May play a role in signal transduction pathways that involve calcium as a second messenger. The chain is Calcium-dependent protein kinase 25 (CPK25) from Arabidopsis thaliana (Mouse-ear cress).